Here is a 470-residue protein sequence, read N- to C-terminus: Protein naked cuticle homolog 1 (470 aa).

Disordered regions lie at residues 1–21 and 90–114; these read MGKL…PEGD and PPEK…PCPG. The N-myristoyl glycine moiety is linked to residue G2. Positions 92-109 are enriched in basic and acidic residues; sequence EKTDGLGSGDEKKMERVS. The tract at residues 125-190 is interaction with DVL1, DVL2 and DVL3; sequence QCDVSMEEDS…LRVKLTVAPD (66 aa). The region spanning 131–166 is the EF-hand domain; it reads EEDSRQEWTFTLYDFDNNGKVTREDITSLLHTIYEV. Positions 144, 146, 148, 150, and 155 each coordinate Ca(2+). A compositionally biased stretch (polar residues) spans 192-205; that stretch reads SQSKRSVLVNQADL. Disordered stretches follow at residues 192–228, 271–314, 337–357, and 446–470; these read SQSK…KKQR, QFGP…QGVD, GTQD…KSVG, and GQPV…FYQT. The segment covering 210 to 227 has biased composition (basic and acidic residues); the sequence is PRAETKPTEDLRSWEKKQ. Polar residues predominate over residues 271-281; it reads QFGPGSPSVAQ. Positions 452–470 are enriched in basic residues; the sequence is HEHHHHHEHHHHYHHFYQT.

The protein belongs to the NKD family. In terms of assembly, interacts with DVL1, DVL2, DVL3 and PPP2R3A. As to expression, expressed in colon, heart, kidney, leukocyte, liver, lung, ovary, pancreas, placenta, prostate, skeletal muscle, small intestine and spleen.

The protein resides in the cell membrane. The protein localises to the cytoplasm. In terms of biological role, cell autonomous antagonist of the canonical Wnt signaling pathway. May activate a second Wnt signaling pathway that controls planar cell polarity. The polypeptide is Protein naked cuticle homolog 1 (NKD1) (Homo sapiens (Human)).